The chain runs to 373 residues: MTAPSMSRPDDVRPEVLDFKPYVPGLSIDEIRDRFGLADVVKLASNENPLGTSPVVQRTLKTKADLAFRYAQSGNPRLTRAIAAHHGVAPERVVAGNGSDEIIDLLIRVRATPGKHNIVAFRPCFSIYELQAKFCGLEFRQADLRPDFTFDWDAFLAATDENTAIAFVTTPDNPSGWCPPVSELEHVARTLPPSCLFVIDEAYMDFCGDEAAHSLLSRLDAFPNIAVLRTFSKSFGLAGLRLGYGILPERLADYLHRVRLPFSVNILAEEAGLAALEDTVFRSETLRVTAEGRAYIAEGLTALGCEVMPSWANFIMFRPPTDATDLFEALLRRGIIIRPLKSYGLPQHLRVSVGNADENRRFIEACKEILPHA.

Residue K233 is modified to N6-(pyridoxal phosphate)lysine.

The protein belongs to the class-II pyridoxal-phosphate-dependent aminotransferase family. Histidinol-phosphate aminotransferase subfamily. Homodimer. Requires pyridoxal 5'-phosphate as cofactor.

The enzyme catalyses L-histidinol phosphate + 2-oxoglutarate = 3-(imidazol-4-yl)-2-oxopropyl phosphate + L-glutamate. It functions in the pathway amino-acid biosynthesis; L-histidine biosynthesis; L-histidine from 5-phospho-alpha-D-ribose 1-diphosphate: step 7/9. This chain is Histidinol-phosphate aminotransferase, found in Nitratidesulfovibrio vulgaris (strain ATCC 29579 / DSM 644 / CCUG 34227 / NCIMB 8303 / VKM B-1760 / Hildenborough) (Desulfovibrio vulgaris).